The sequence spans 560 residues: MKYGKVSFLALLCSLYVRGSLADPESEQEPLVFNPTEVKAPLVEQFQGAWSERWIPSHAKRFVNGIEEMSYVGEWTVEESSGPGALKGEAGLVMKDEAAHHAISYEFDEPINEPEKDLVVQYEVNPEEGLNCGGAYLKLLAEPTHGEMSNSIDYRIMFGPDKCGVNDRVHFIFKHKNPLTGEYSEKHLDSRPASLLKPGITNLYTLIVKPDQTFEVRINGDVVRQGSLFYDFIPPVLPPVEIYDPEDIKPADWVDEPEIPDPNAVKPDDWDEDAPRMIPDPDAVKPEDWLEDEPLYIPDPEAQKPEDWDDEEDGDWIPSEIINPKCIEGAGCGEWKPPMIRNPNYRGPWSPPMIPNPEFIGEWYPRKIPNPDYFDDDHPSHFGPLYGVGFELWTMQPNIRFSNIYVGHSIEDAERLGNETFLPKLKAERELLSKQESMEKQSMHVDEESNQILEKFLDVYDIIKAKLPPNVAEKVDYYVETIIETPEIGIAIVAVLGSLTAVILTCYFYFFASSSPASLSTGTTEAEKEQQEKFKQETETEKIDVSYAPETESPTAKNED.

Residues 1–22 (MKYGKVSFLALLCSLYVRGSLA) form the signal peptide. The Lumenal portion of the chain corresponds to 23-489 (DPESEQEPLV…ETIIETPEIG (467 aa)). Residues cysteine 132 and cysteine 163 are joined by a disulfide bond. Residues tyrosine 136, lysine 138, tyrosine 154, and aspartate 161 each contribute to the an alpha-D-glucoside site. The segment at 242–375 (IYDPEDIKPA…RKIPNPDYFD (134 aa)) is p domain (Extended arm). Repeat copies occupy residues 244-255 (DPEDIKPADWVD), 261-272 (DPNAVKPDDWDE), 280-291 (DPDAVKPEDWLE), 299-310 (DPEAQKPEDWDD), and 314-324 (GDWIPSEIINP). 4 X approximate repeats regions lie at residues 244 to 310 (DPED…DWDD) and 314 to 371 (GDWI…IPNP). Residues 253-273 (WVDEPEIPDPNAVKPDDWDED) form a disordered region. Residues cysteine 326 and cysteine 332 are joined by a disulfide bond. Tandem repeats lie at residues 333–343 (GEWKPPMIRNP), 347–357 (GPWSPPMIPNP), and 361–371 (GEWYPRKIPNP). Glutamate 391 serves as a coordination point for an alpha-D-glucoside. N-linked (GlcNAc...) asparagine glycosylation occurs at asparagine 418. The helical transmembrane segment at 490 to 512 (IAIVAVLGSLTAVILTCYFYFFA) threads the bilayer. The Cytoplasmic segment spans residues 513–560 (SSSPASLSTGTTEAEKEQQEKFKQETETEKIDVSYAPETESPTAKNED). The interval 517-560 (ASLSTGTTEAEKEQQEKFKQETETEKIDVSYAPETESPTAKNED) is disordered. Over residues 525–544 (EAEKEQQEKFKQETETEKID) the composition is skewed to basic and acidic residues. Position 551 is a phosphothreonine (threonine 551). Serine 553 is subject to Phosphoserine. A Phosphothreonine modification is found at threonine 555.

The protein belongs to the calreticulin family.

The protein resides in the endoplasmic reticulum membrane. Functionally, calcium-binding protein that interacts with newly synthesized monoglucosylated glycoproteins in the endoplasmic reticulum. It may act in assisting protein assembly and/or in the retention within the ER of unassembled protein subunits. It seems to play a major role in the quality control apparatus of the ER by the retention of incorrectly folded proteins. The sequence is that of Calnexin homolog (cal1) from Schizosaccharomyces pombe (strain 972 / ATCC 24843) (Fission yeast).